The chain runs to 1158 residues: Putative HERC2-like protein 3 (1158 aa).

Positions 281–302 (PRKKRVPKKPESTDDEEKIGNE) are disordered. The segment covering 293 to 302 (TDDEEKIGNE) has biased composition (acidic residues). Residues 587-660 (SGPELAAMMK…NYDLKLAELP (74 aa)) enclose the MIB/HERC2 domain. The interval 662-684 (PAQPSAEDSDTEDDSEAEQTERN) is disordered. Positions 668–679 (EDSDTEDDSEAE) are enriched in acidic residues.

In Homo sapiens (Human), this protein is Putative HERC2-like protein 3 (HERC2P3).